The chain runs to 435 residues: Adenylosuccinate synthetase (435 aa).

Residues 22-28 (GDEGKGK) and 50-52 (GHT) contribute to the GTP site. The Proton acceptor role is filled by Asp-23. 2 residues coordinate Mg(2+): Asp-23 and Gly-50. Residues 23–26 (DEGK), 48–51 (NAGH), Thr-140, Arg-154, Gln-235, Thr-250, and Arg-314 each bind IMP. His-51 acts as the Proton donor in catalysis. 310-316 (ATTGRKR) contributes to the substrate binding site. Residues Arg-316, 342 to 344 (KLD), and 424 to 426 (SVG) contribute to the GTP site.

Belongs to the adenylosuccinate synthetase family. As to quaternary structure, homodimer. Mg(2+) serves as cofactor.

Its subcellular location is the cytoplasm. The catalysed reaction is IMP + L-aspartate + GTP = N(6)-(1,2-dicarboxyethyl)-AMP + GDP + phosphate + 2 H(+). Its pathway is purine metabolism; AMP biosynthesis via de novo pathway; AMP from IMP: step 1/2. In terms of biological role, plays an important role in the de novo pathway of purine nucleotide biosynthesis. Catalyzes the first committed step in the biosynthesis of AMP from IMP. The chain is Adenylosuccinate synthetase from Chlorobaculum tepidum (strain ATCC 49652 / DSM 12025 / NBRC 103806 / TLS) (Chlorobium tepidum).